Reading from the N-terminus, the 138-residue chain is Histone H2B.3 (138 aa).

Basic and acidic residues-rich tracts occupy residues 1 to 18 (MAPK…EKTT) and 26 to 38 (EKRP…GGDK). A disordered region spans residues 1–46 (MAPKAEKKPVAEKAEKTTAAKKTKAEKRPPASKEGGDKKGKKKSKK). N6-acetyllysine occurs at positions 7 and 27. A Glycyl lysine isopeptide (Lys-Gly) (interchain with G-Cter in ubiquitin) cross-link involves residue Lys-134.

This sequence belongs to the histone H2B family. As to quaternary structure, the nucleosome is a histone octamer containing two molecules each of H2A, H2B, H3 and H4 assembled in one H3-H4 heterotetramer and two H2A-H2B heterodimers. The octamer wraps approximately 147 bp of DNA. In terms of processing, can be acetylated to form H2BK6ac and H2BK33ac. Post-translationally, monoubiquitinated to form H2BK143ub1; may give a specific tag for epigenetic transcriptional activation.

Its subcellular location is the nucleus. The protein resides in the chromosome. Functionally, core component of nucleosome. Nucleosomes wrap and compact DNA into chromatin, limiting DNA accessibility to the cellular machineries which require DNA as a template. Histones thereby play a central role in transcription regulation, DNA repair, DNA replication and chromosomal stability. DNA accessibility is regulated via a complex set of post-translational modifications of histones, also called histone code, and nucleosome remodeling. The sequence is that of Histone H2B.3 from Triticum aestivum (Wheat).